The primary structure comprises 88 residues: Exodeoxyribonuclease 7 small subunit (88 aa).

This sequence belongs to the XseB family. As to quaternary structure, heterooligomer composed of large and small subunits.

It localises to the cytoplasm. It carries out the reaction Exonucleolytic cleavage in either 5'- to 3'- or 3'- to 5'-direction to yield nucleoside 5'-phosphates.. In terms of biological role, bidirectionally degrades single-stranded DNA into large acid-insoluble oligonucleotides, which are then degraded further into small acid-soluble oligonucleotides. In Bordetella petrii (strain ATCC BAA-461 / DSM 12804 / CCUG 43448), this protein is Exodeoxyribonuclease 7 small subunit.